The primary structure comprises 336 residues: GTP 3',8-cyclase (336 aa).

The Radical SAM core domain maps to 17 to 238 (GFSRRFHYLR…WTQQNRNLTD (222 aa)). Arg-26 contacts GTP. Positions 33 and 37 each coordinate [4Fe-4S] cluster. Tyr-39 contributes to the S-adenosyl-L-methionine binding site. [4Fe-4S] cluster is bound at residue Cys-40. Arg-75 is a binding site for GTP. Residue Gly-79 coordinates S-adenosyl-L-methionine. Thr-106 contacts GTP. Residue Ser-130 participates in S-adenosyl-L-methionine binding. Lys-167 provides a ligand contact to GTP. S-adenosyl-L-methionine is bound at residue Met-201. Positions 264 and 267 each coordinate [4Fe-4S] cluster. 269 to 271 (RLR) provides a ligand contact to GTP. Residue Cys-281 coordinates [4Fe-4S] cluster.

It belongs to the radical SAM superfamily. MoaA family. As to quaternary structure, monomer and homodimer. Requires [4Fe-4S] cluster as cofactor.

It catalyses the reaction GTP + AH2 + S-adenosyl-L-methionine = (8S)-3',8-cyclo-7,8-dihydroguanosine 5'-triphosphate + 5'-deoxyadenosine + L-methionine + A + H(+). It participates in cofactor biosynthesis; molybdopterin biosynthesis. Functionally, catalyzes the cyclization of GTP to (8S)-3',8-cyclo-7,8-dihydroguanosine 5'-triphosphate. The chain is GTP 3',8-cyclase from Tolumonas auensis (strain DSM 9187 / NBRC 110442 / TA 4).